A 312-amino-acid polypeptide reads, in one-letter code: MRKRRRQPSLAQLRAFAAVAEHLHFRDAAAAIGMSQPALSGAVSALEESLGVTLLERTTRKVLLSPAGERLAARAKSVLAEVGALVEEADALQAPFTGVLRLGVIPTVAPYVLPTVLRLVHDRYPRLDLQVHEEQTASLLDGLTGGRLDLLLLAVPLGVPGVVELPLFDEDFVLVTPLEHGLGGREGIPRKALRELNLLLLDEGHCLRDQALDICREAGSAGVAATTTAAGLSTLVQLVAGGLGVTLLPHTAVQVETTRSGRLLTGRFADPAPGRRIALAMRTGAARAAEYEELAAALREAMRDLPVRIVRD.

Residues 8–65 enclose the HTH lysR-type domain; the sequence is PSLAQLRAFAAVAEHLHFRDAAAAIGMSQPALSGAVSALEESLGVTLLERTTRKVLLS. A DNA-binding region (H-T-H motif) is located at residues 25-44; that stretch reads FRDAAAAIGMSQPALSGAVS.

This sequence belongs to the LysR transcriptional regulatory family.

Functionally, required for the induction of a regulon of hydrogen peroxide inducible genes such as catalase and glutathione-reductase. This is Probable hydrogen peroxide-inducible genes activator (oxyR) from Streptomyces viridosporus.